A 281-amino-acid chain; its full sequence is Homoserine kinase (281 aa).

ATP is bound at residue 83-93 (PVSSGLGSSAA).

This sequence belongs to the GHMP kinase family. Homoserine kinase subfamily.

Its subcellular location is the cytoplasm. The enzyme catalyses L-homoserine + ATP = O-phospho-L-homoserine + ADP + H(+). It participates in amino-acid biosynthesis; L-threonine biosynthesis; L-threonine from L-aspartate: step 4/5. Catalyzes the ATP-dependent phosphorylation of L-homoserine to L-homoserine phosphate. In Thermotoga petrophila (strain ATCC BAA-488 / DSM 13995 / JCM 10881 / RKU-1), this protein is Homoserine kinase.